Here is a 128-residue protein sequence, read N- to C-terminus: Fluoride-specific ion channel FluC (128 aa).

4 helical membrane-spanning segments follow: residues Ile5 to Ala25, Leu35 to Phe55, Leu67 to Val87, and Phe96 to Leu116. Positions 75 and 78 each coordinate Na(+).

The protein belongs to the fluoride channel Fluc/FEX (TC 1.A.43) family.

Its subcellular location is the cell inner membrane. The enzyme catalyses fluoride(in) = fluoride(out). Na(+) is not transported, but it plays an essential structural role and its presence is essential for fluoride channel function. Functionally, fluoride-specific ion channel. Important for reducing fluoride concentration in the cell, thus reducing its toxicity. The sequence is that of Fluoride-specific ion channel FluC from Burkholderia orbicola (strain MC0-3).